The sequence spans 508 residues: p-aminobenzoyl-glutamate transport protein (508 aa).

The next 13 helical transmembrane spans lie at 30-50, 85-105, 121-139, 140-159, 164-184, 211-231, 261-281, 303-323, 343-363, 382-402, 405-425, 439-459, and 479-499; these read FLLF…LSAF, FSGF…GLAE, VNAR…FSHI, SSDA…FLAV, VAGL…NLLI, IDNW…GGLI, GLRI…LMVI, GIVP…GIAT, MAGF…FNWS, LSGI…CMFI, GSAI…LLGF, SSVL…GFLQ, and LIFL…GLPI.

The protein resides in the cell inner membrane. The enzyme catalyses N-(4-aminobenzoyl)-L-glutamate(in) + H(+)(in) = N-(4-aminobenzoyl)-L-glutamate(out) + H(+)(out). Completely inhibited by 100 nM sodium azide and by the proton ionophore carbonyl cyanide m-chlorophenylhydrazone (CCCP). Is also strongly inhibited by 100 mM potassium fluoride. Essential for aminobenzoyl-glutamate utilization. It catalyzes the concentration-dependent uptake of p-aminobenzoyl-glutamate (PABA-GLU) into the cell and allows accumulation of PABA-GLU to a concentration enabling AbgAB to catalyze cleavage into p-aminobenzoate and glutamate. It also seems to increase the sensitivity to low levels of aminobenzoyl-glutamate. May actually serve physiologically as a transporter for some other molecule, perhaps a dipeptide, and that it transports p-aminobenzoyl-glutamate as a secondary activity. The physiological role of abgABT should be clarified. The protein is p-aminobenzoyl-glutamate transport protein of Escherichia coli (strain K12).